Reading from the N-terminus, the 97-residue chain is Citrate lyase acyl carrier protein (97 aa).

Ser-14 carries the O-(phosphoribosyl dephospho-coenzyme A)serine modification.

This sequence belongs to the CitD family. In terms of assembly, oligomer with a subunit composition of (alpha,beta,gamma)6.

It localises to the cytoplasm. In terms of biological role, covalent carrier of the coenzyme of citrate lyase. This is Citrate lyase acyl carrier protein from Lactobacillus helveticus (strain DPC 4571).